A 59-amino-acid chain; its full sequence is Large ribosomal subunit protein uL30 (59 aa).

The protein belongs to the universal ribosomal protein uL30 family. As to quaternary structure, part of the 50S ribosomal subunit.

In Alkaliphilus oremlandii (strain OhILAs) (Clostridium oremlandii (strain OhILAs)), this protein is Large ribosomal subunit protein uL30.